We begin with the raw amino-acid sequence, 166 residues long: Large ribosomal subunit protein bL19 (166 aa).

It belongs to the bacterial ribosomal protein bL19 family. In terms of assembly, part of the 50S ribosomal subunit. Forms a cluster with proteins L3 and L14.

Functionally, this protein is located at the 30S-50S ribosomal subunit interface and may play a role in the structure and function of the aminoacyl-tRNA binding site. Binds the 23S rRNA. This is Large ribosomal subunit protein bL19 (rplS) from Deinococcus radiodurans (strain ATCC 13939 / DSM 20539 / JCM 16871 / CCUG 27074 / LMG 4051 / NBRC 15346 / NCIMB 9279 / VKM B-1422 / R1).